Reading from the N-terminus, the 508-residue chain is 2,3-bisphosphoglycerate-independent phosphoglycerate mutase (508 aa).

Positions 13 and 63 each coordinate Mn(2+). Ser63 serves as the catalytic Phosphoserine intermediate. Residues His122, 152 to 153 (RD), Arg184, Arg190, 256 to 259 (RADR), and Lys330 contribute to the substrate site. Positions 397, 401, 438, 439, and 457 each coordinate Mn(2+).

Belongs to the BPG-independent phosphoglycerate mutase family. In terms of assembly, monomer. Mn(2+) is required as a cofactor.

The catalysed reaction is (2R)-2-phosphoglycerate = (2R)-3-phosphoglycerate. It functions in the pathway carbohydrate degradation; glycolysis; pyruvate from D-glyceraldehyde 3-phosphate: step 3/5. In terms of biological role, catalyzes the interconversion of 2-phosphoglycerate and 3-phosphoglycerate. This Laribacter hongkongensis (strain HLHK9) protein is 2,3-bisphosphoglycerate-independent phosphoglycerate mutase.